Reading from the N-terminus, the 175-residue chain is MQTIILGGGCFWCTESVFQSVKGVQKVTSGYMGGEDANLANYKDVCSGTTGHIEVVRVDFDDTIVPLEVVLDIFFATHDPTTRDRQGNDIGSQYRSVVFYTDEETQKPTIDRTINKLRDMGLDIVTEVHPVHEFHVAEDYHQDYFNKNPTQGYCQAVIPPKLGKLRKEFKQYMAK.

Cys10 is a catalytic residue.

This sequence belongs to the MsrA Met sulfoxide reductase family.

The enzyme catalyses L-methionyl-[protein] + [thioredoxin]-disulfide + H2O = L-methionyl-(S)-S-oxide-[protein] + [thioredoxin]-dithiol. It catalyses the reaction [thioredoxin]-disulfide + L-methionine + H2O = L-methionine (S)-S-oxide + [thioredoxin]-dithiol. In terms of biological role, has an important function as a repair enzyme for proteins that have been inactivated by oxidation. Catalyzes the reversible oxidation-reduction of methionine sulfoxide in proteins to methionine. This Psychrobacter sp. (strain PRwf-1) protein is Peptide methionine sulfoxide reductase MsrA.